The primary structure comprises 320 residues: Heterogeneous nuclear ribonucleoprotein A1-like 2 (320 aa).

The segment at serine 4–aspartate 94 is globular A domain. Phosphoserine is present on residues serine 6 and serine 22. 2 RRM domains span residues arginine 14–arginine 97 and lysine 105–glutamine 184. The segment at serine 95–glutamate 185 is globular B domain. Residues leucine 181–phenylalanine 216 form a disordered region. 4 positions are modified to asymmetric dimethylarginine; alternate: arginine 194, arginine 206, arginine 218, and arginine 225. Omega-N-methylarginine; alternate is present on residues arginine 194, arginine 206, arginine 218, and arginine 225. Residues glycine 198–phenylalanine 216 show a composition bias toward gly residues. Residues arginine 218–serine 240 form an RNA-binding RGG-box region. The segment at asparagine 268–tyrosine 305 is nuclear targeting sequence. Residues serine 271 to phenylalanine 320 are disordered. Positions methionine 276 to glutamine 294 are enriched in gly residues. Arginine 284 is subject to Omega-N-methylarginine. At lysine 298 the chain carries N6-acetyllysine. The segment covering valine 307–phenylalanine 320 has biased composition (low complexity).

Its subcellular location is the nucleus. It localises to the cytoplasm. Involved in the packaging of pre-mRNA into hnRNP particles, transport of poly(A) mRNA from the nucleus to the cytoplasm and may modulate splice site selection. This is Heterogeneous nuclear ribonucleoprotein A1-like 2 (HNRNPA1L2) from Homo sapiens (Human).